The primary structure comprises 281 residues: Release factor glutamine methyltransferase (281 aa).

S-adenosyl-L-methionine contacts are provided by residues 121 to 125 (GSGTG), Asp144, and Asn188. 188–191 (NPPY) contributes to the substrate binding site.

Belongs to the protein N5-glutamine methyltransferase family. PrmC subfamily.

The catalysed reaction is L-glutaminyl-[peptide chain release factor] + S-adenosyl-L-methionine = N(5)-methyl-L-glutaminyl-[peptide chain release factor] + S-adenosyl-L-homocysteine + H(+). Functionally, methylates the class 1 translation termination release factors RF1/PrfA and RF2/PrfB on the glutamine residue of the universally conserved GGQ motif. The polypeptide is Release factor glutamine methyltransferase (Aquifex aeolicus (strain VF5)).